The sequence spans 445 residues: Ribosome biogenesis protein YTM1 (445 aa).

Residues 8–89 form a ubiquitin-like (UBL) domain region; that stretch reads VKVKFFTREQ…EAVLNVEYTR (82 aa). Positions 99–445 are sufficient for interaction with ERB1 and association with 66S pre-ribosomes; that stretch reads SFSNEDWVSA…FNKGDNIFKN (347 aa). WD repeat units follow at residues 101–138, 140–178, 195–232, 270–310, 312–351, 358–398, and 409–445; these read SNED…EKQY, GHTG…VKHV, GHQA…MTAV, SHKA…CVDT, STSY…SAKI, GHKN…SIYT, and GIND…IFKN.

It belongs to the WD repeat WDR12/YTM1 family. Component of the NOP7 complex, composed of ERB1, NOP7 and YTM1. The complex is held together by ERB1, which interacts with NOP7 via its N-terminal domain and with YTM1 via a high-affinity interaction between the seven-bladed beta-propeller domains of the 2 proteins. The NOP7 complex associates with the 66S pre-ribosome. Interacts (via UBL domain) with MDN1 (via VWFA/MIDAS domain).

It localises to the nucleus. The protein localises to the nucleolus. The protein resides in the nucleoplasm. Its function is as follows. Component of the NOP7 complex, which is required for maturation of the 25S and 5.8S ribosomal RNAs and formation of the 60S ribosome. This chain is Ribosome biogenesis protein YTM1, found in Eremothecium gossypii (strain ATCC 10895 / CBS 109.51 / FGSC 9923 / NRRL Y-1056) (Yeast).